The primary structure comprises 329 residues: Beta-ketoacyl-[acyl-carrier-protein] synthase III (329 aa).

Active-site residues include Cys-123 and His-256. Residues 257–261 (QANIR) are ACP-binding. Residue Asn-286 is part of the active site.

It belongs to the thiolase-like superfamily. FabH family. In terms of assembly, homodimer.

Its subcellular location is the cytoplasm. It carries out the reaction malonyl-[ACP] + acetyl-CoA + H(+) = 3-oxobutanoyl-[ACP] + CO2 + CoA. It participates in lipid metabolism; fatty acid biosynthesis. Its function is as follows. Catalyzes the condensation reaction of fatty acid synthesis by the addition to an acyl acceptor of two carbons from malonyl-ACP. Catalyzes the first condensation reaction which initiates fatty acid synthesis and may therefore play a role in governing the total rate of fatty acid production. Possesses both acetoacetyl-ACP synthase and acetyl transacylase activities. Its substrate specificity determines the biosynthesis of branched-chain and/or straight-chain of fatty acids. The polypeptide is Beta-ketoacyl-[acyl-carrier-protein] synthase III (Burkholderia pseudomallei (strain 1710b)).